A 429-amino-acid chain; its full sequence is Glutamate-1-semialdehyde 2,1-aminomutase 2 (429 aa).

Residue Lys-268 is modified to N6-(pyridoxal phosphate)lysine.

Belongs to the class-III pyridoxal-phosphate-dependent aminotransferase family. HemL subfamily. As to quaternary structure, homodimer. Requires pyridoxal 5'-phosphate as cofactor.

It localises to the cytoplasm. It carries out the reaction (S)-4-amino-5-oxopentanoate = 5-aminolevulinate. Its pathway is porphyrin-containing compound metabolism; protoporphyrin-IX biosynthesis; 5-aminolevulinate from L-glutamyl-tRNA(Glu): step 2/2. This is Glutamate-1-semialdehyde 2,1-aminomutase 2 from Bacillus cereus (strain AH187).